Here is a 59-residue protein sequence, read N- to C-terminus: Large ribosomal subunit protein bL32 (59 aa).

Residues 1-22 form a disordered region; it reads MAVQQNKKSPSKRGMHRSHDFL.

The protein belongs to the bacterial ribosomal protein bL32 family.

The protein is Large ribosomal subunit protein bL32 of Thiobacillus denitrificans (strain ATCC 25259 / T1).